A 123-amino-acid polypeptide reads, in one-letter code: Small ribosomal subunit protein uS12cz/uS12cy (123 aa).

It belongs to the universal ribosomal protein uS12 family. Part of the 30S ribosomal subunit.

Its subcellular location is the plastid. It localises to the chloroplast. With S4 and S5 plays an important role in translational accuracy. Located at the interface of the 30S and 50S subunits. The chain is Small ribosomal subunit protein uS12cz/uS12cy (rps12-A) from Cucumis sativus (Cucumber).